Reading from the N-terminus, the 153-residue chain is Pheromone-binding protein Gp-9 (153 aa).

The N-terminal stretch at 1–19 (MKTFVLHIFIFALVAFASA) is a signal peptide. 3 cysteine pairs are disulfide-bonded: C37-C77, C73-C129, and C118-C138.

It belongs to the PBP/GOBP family. In terms of assembly, homodimer.

The protein localises to the secreted. Colony queen number, a major feature of social organization, is associated with worker genotype for Gp-9. Colonies are headed by either a single reproductive queen (monogyne form) or multiple queens (polygyne form). Differences in worker Gp-9 genotypes between social forms may cause differences in workers' abilities to recognize queens and regulate their numbers. The protein is Pheromone-binding protein Gp-9 of Solenopsis pusillignis (Fire ant).